Here is a 264-residue protein sequence, read N- to C-terminus: Thiazole synthase (264 aa).

Lys106 serves as the catalytic Schiff-base intermediate with DXP. 1-deoxy-D-xylulose 5-phosphate-binding positions include Gly167, 193-194 (AG), and 215-216 (NS).

The protein belongs to the ThiG family. As to quaternary structure, homotetramer. Forms heterodimers with either ThiH or ThiS.

It is found in the cytoplasm. It carries out the reaction [ThiS sulfur-carrier protein]-C-terminal-Gly-aminoethanethioate + 2-iminoacetate + 1-deoxy-D-xylulose 5-phosphate = [ThiS sulfur-carrier protein]-C-terminal Gly-Gly + 2-[(2R,5Z)-2-carboxy-4-methylthiazol-5(2H)-ylidene]ethyl phosphate + 2 H2O + H(+). It participates in cofactor biosynthesis; thiamine diphosphate biosynthesis. In terms of biological role, catalyzes the rearrangement of 1-deoxy-D-xylulose 5-phosphate (DXP) to produce the thiazole phosphate moiety of thiamine. Sulfur is provided by the thiocarboxylate moiety of the carrier protein ThiS. In vitro, sulfur can be provided by H(2)S. This chain is Thiazole synthase, found in Ectopseudomonas mendocina (strain ymp) (Pseudomonas mendocina).